Here is a 170-residue protein sequence, read N- to C-terminus: MNLKKIAIASSVFAGITMALTCHAVTVTATHTVESDAEFTIDWVDAGPTTTDAKDGEVWGHLDMTQTRGTPTFGKLRNPQGETSPGPLKAPFSFTGPDGHTARAYLDSYGAPIHNYAGDNLANGVKVGSGSGNTPFVVGTASRLTARIFGDQTLVPGVYRTTFELTTWTD.

The signal sequence occupies residues 1-24 (MNLKKIAIASSVFAGITMALTCHA).

This protein is a non-fimbrial hemagglutinin that is specific for blood group M. The sequence is that of M-agglutinin (bmaE) from Escherichia coli.